The following is a 233-amino-acid chain: Uracil-DNA glycosylase (233 aa).

Aspartate 70 serves as the catalytic Proton acceptor.

This sequence belongs to the uracil-DNA glycosylase (UDG) superfamily. UNG family.

Its subcellular location is the cytoplasm. The enzyme catalyses Hydrolyzes single-stranded DNA or mismatched double-stranded DNA and polynucleotides, releasing free uracil.. Its function is as follows. Excises uracil residues from the DNA which can arise as a result of misincorporation of dUMP residues by DNA polymerase or due to deamination of cytosine. This is Uracil-DNA glycosylase from Helicobacter pylori (strain HPAG1).